Reading from the N-terminus, the 167-residue chain is S-ribosylhomocysteine lyase (167 aa).

Residues histidine 54, histidine 58, and cysteine 128 each coordinate Fe cation.

It belongs to the LuxS family. As to quaternary structure, homodimer. It depends on Fe cation as a cofactor.

It carries out the reaction S-(5-deoxy-D-ribos-5-yl)-L-homocysteine = (S)-4,5-dihydroxypentane-2,3-dione + L-homocysteine. In terms of biological role, involved in the synthesis of autoinducer 2 (AI-2) which is secreted by bacteria and is used to communicate both the cell density and the metabolic potential of the environment. The regulation of gene expression in response to changes in cell density is called quorum sensing. Catalyzes the transformation of S-ribosylhomocysteine (RHC) to homocysteine (HC) and 4,5-dihydroxy-2,3-pentadione (DPD). This chain is S-ribosylhomocysteine lyase, found in Haemophilus influenzae (strain PittGG).